The sequence spans 110 residues: UPF0122 protein SERP0802 (110 aa).

The protein belongs to the UPF0122 family.

Functionally, might take part in the signal recognition particle (SRP) pathway. This is inferred from the conservation of its genetic proximity to ftsY/ffh. May be a regulatory protein. This Staphylococcus epidermidis (strain ATCC 35984 / DSM 28319 / BCRC 17069 / CCUG 31568 / BM 3577 / RP62A) protein is UPF0122 protein SERP0802.